The primary structure comprises 118 residues: Putative membrane protein insertion efficiency factor (118 aa).

This sequence belongs to the UPF0161 family.

The protein resides in the cell inner membrane. Functionally, could be involved in insertion of integral membrane proteins into the membrane. The polypeptide is Putative membrane protein insertion efficiency factor (Helicobacter pylori (strain HPAG1)).